We begin with the raw amino-acid sequence, 142 residues long: 2-aminomuconate deaminase (142 aa).

This sequence belongs to the 2-aminomuconate deaminase family. In terms of assembly, homotetramer.

The enzyme catalyses (2Z,4E)-2-aminomuconate + H2O = (3E)-2-oxohex-3-enedioate + NH4(+). Slightly inhibited by Pb(2+), Hg(+) and Cu(2+). In terms of biological role, involved in the modified meta-cleavage pathway for the 2-aminophenol catabolism. Only active toward 2-aminomuconic acid. The sequence is that of 2-aminomuconate deaminase (amnD) from Pseudomonas sp.